Reading from the N-terminus, the 368-residue chain is DNA replication and repair protein RecF (368 aa).

Position 30–37 (Gly30–Thr37) interacts with ATP.

This sequence belongs to the RecF family.

The protein resides in the cytoplasm. In terms of biological role, the RecF protein is involved in DNA metabolism; it is required for DNA replication and normal SOS inducibility. RecF binds preferentially to single-stranded, linear DNA. It also seems to bind ATP. In Streptococcus pyogenes serotype M18 (strain MGAS8232), this protein is DNA replication and repair protein RecF.